We begin with the raw amino-acid sequence, 565 residues long: Nephronectin (565 aa).

The first 19 residues, Met1 to Ala19, serve as a signal peptide directing secretion. The EGF-like 1 domain maps to Ser52 to Asn87. Disulfide bonds link Cys56–Cys69, Cys60–Cys75, Cys77–Cys86, Cys93–Cys104, Cys100–Cys113, and Cys115–Cys127. The 40-residue stretch at Asp89–Ser128 folds into the EGF-like 2; calcium-binding domain. One can recognise an EGF-like 3 domain in the interval Thr132 to Val168. The 45-residue stretch at Asp169–His213 folds into the EGF-like 4; calcium-binding domain. 6 disulfides stabilise this stretch: Cys173-Cys186, Cys180-Cys195, Cys197-Cys212, Cys218-Cys231, Cys225-Cys240, and Cys242-Cys253. The EGF-like 5; calcium-binding domain occupies Asp214–Val254. The tract at residues Tyr301–Arg373 is disordered. Low complexity predominate over residues Pro304–Thr316. Residues Arg317–Arg349 are compositionally biased toward pro residues. An Integrin interaction motif is present at residues Arg382 to Asp384. The 144-residue stretch at His420 to Glu563 folds into the MAM domain.

Belongs to the nephronectin family. In terms of assembly, homodimer and homotrimer.

It is found in the secreted. The protein resides in the extracellular space. It localises to the extracellular matrix. Its function is as follows. Functional ligand of integrin alpha-8/beta-1 in kidney development. Regulates the expression of GDNF with integrin alpha-8/beta-1 which is essential for kidney development. May also play a role in the development and function of various tissues, regulating cell adhesion, spreading and survival through the binding of several integrins. The protein is Nephronectin (NPNT) of Pongo abelii (Sumatran orangutan).